Consider the following 298-residue polypeptide: S-adenosyl-L-methionine-dependent methyltransferase dpfgK (298 aa).

This sequence belongs to the methyltransferase superfamily.

Its pathway is secondary metabolite biosynthesis; terpenoid biosynthesis. S-adenosyl-L-methionine-dependent methyltransferase; part of the gene cluster that mediates the biosynthesis of diterpenoid pyrones. The first step of the pathway is the synthesis of the alpha-pyrone moiety by the polyketide synthase dpfgA via condensation of one acetyl-CoA starter unit with 3 malonyl-CoA units and 2 methylations. The alpha-pyrone is then combined with geranylgeranyl pyrophosphate (GGPP) formed by the GGPP synthase dpfgD through the action of the prenyltransferase dpfgC to yield a linear alpha-pyrone diterpenoid. Subsequent steps in the diterpenoid pyrone biosynthetic pathway involve the decalin core formation, which is initiated by the epoxidation of the C10-C11 olefin by the FAD-dependent oxidoreductase dpfgE, and is followed by a cyclization cascade catalyzed by the terpene cyclase dpfgB. The short chain dehydrogenase/reductase dpfgG then oxidizes the 8S hydroxy group to a ketone and the short chain dehydrogenase/reductase dpfgH reduces the ketone to the 8R hydroxy group to yield higginsianin B. Higginsianin B is further methylated by the methyltransferase dpfgI to produce the intermediate named FDDP B. The cytochrome P450 monooxygenase dfgpJ then catalyzes a three-step oxidation at C-27 to generate a carboxylic acid as well as C-26 hydroxylation. Finally, methyltransferase dpfgK methylates the carboxylic acid generated by dpfgJ, yielding the final diterpenoid pyrones from the pathway which were named FDDP D and FDDP E. The sequence is that of S-adenosyl-L-methionine-dependent methyltransferase dpfgK from Gibberella zeae (strain ATCC MYA-4620 / CBS 123657 / FGSC 9075 / NRRL 31084 / PH-1) (Wheat head blight fungus).